Consider the following 513-residue polypeptide: V-type proton ATPase subunit B, kidney isoform (513 aa).

The span at 1–18 shows a compositional bias: polar residues; the sequence is MATTVDSRSSGFTGNSCD. The segment at 1-21 is disordered; that stretch reads MATTVDSRSSGFTGNSCDPGT. R394 provides a ligand contact to ATP. The PDZ-binding motif lies at 510–513; that stretch reads DTAL.

Belongs to the ATPase alpha/beta chains family. As to quaternary structure, V-ATPase is a heteromultimeric enzyme made up of two complexes: the ATP-hydrolytic V1 complex and the proton translocation V0 complex. The V1 complex consists of three catalytic AB heterodimers that form a heterohexamer, three peripheral stalks each consisting of EG heterodimers, one central rotor including subunits D and F, and the regulatory subunits C and H. The proton translocation complex V0 consists of the proton transport subunit a, a ring of proteolipid subunits c9c'', rotary subunit d, subunits e and f, and the accessory subunits ATP6AP1/Ac45 and ATP6AP2/PRR. Forms a complex with NHERF1 and SCL4A7. As to expression, highly expressed in the kidney; found in early distal nephron, encompassing thick ascending limbs and distal convoluted tubules and in the alpha-intercalated cells of the cortical collecting ducts (at protein level). Expressed in the olfactory epithelium (at protein level). Expressed at lower levels in the testis.

It localises to the apical cell membrane. The protein resides in the basolateral cell membrane. Functionally, non-catalytic subunit of the V1 complex of vacuolar(H+)-ATPase (V-ATPase), a multisubunit enzyme composed of a peripheral complex (V1) that hydrolyzes ATP and a membrane integral complex (V0) that translocates protons. V-ATPase is responsible for acidifying and maintaining the pH of intracellular compartments and in some cell types, is targeted to the plasma membrane, where it is responsible for acidifying the extracellular environment. Essential for the proper assembly and activity of V-ATPase. In renal intercalated cells, mediates secretion of protons (H+) into the urine thereby ensuring correct urinary acidification. Required for optimal olfactory function by mediating the acidification of the nasal olfactory epithelium. The chain is V-type proton ATPase subunit B, kidney isoform (Atp6v1b1) from Mus musculus (Mouse).